Reading from the N-terminus, the 233-residue chain is 3-dehydroquinate dehydratase (233 aa).

3-dehydroquinate is bound by residues 34-36 (ELR) and R64. The active-site Proton donor/acceptor is H118. The active-site Schiff-base intermediate with substrate is the K145. R185, S205, and Q209 together coordinate 3-dehydroquinate.

Belongs to the type-I 3-dehydroquinase family. In terms of assembly, homodimer.

The enzyme catalyses 3-dehydroquinate = 3-dehydroshikimate + H2O. The protein operates within metabolic intermediate biosynthesis; chorismate biosynthesis; chorismate from D-erythrose 4-phosphate and phosphoenolpyruvate: step 3/7. Its function is as follows. Involved in the third step of the chorismate pathway, which leads to the biosynthesis of aromatic amino acids. Catalyzes the cis-dehydration of 3-dehydroquinate (DHQ) and introduces the first double bond of the aromatic ring to yield 3-dehydroshikimate. In Coxiella burnetii (strain CbuG_Q212) (Coxiella burnetii (strain Q212)), this protein is 3-dehydroquinate dehydratase.